Here is a 453-residue protein sequence, read N- to C-terminus: Glutamyl-tRNA(Gln) amidotransferase subunit A (453 aa).

Catalysis depends on charge relay system residues lysine 55 and serine 130. Serine 154 functions as the Acyl-ester intermediate in the catalytic mechanism.

The protein belongs to the amidase family. GatA subfamily. In terms of assembly, heterotrimer of A, B and C subunits.

The enzyme catalyses L-glutamyl-tRNA(Gln) + L-glutamine + ATP + H2O = L-glutaminyl-tRNA(Gln) + L-glutamate + ADP + phosphate + H(+). In terms of biological role, allows the formation of correctly charged Gln-tRNA(Gln) through the transamidation of misacylated Glu-tRNA(Gln) in organisms which lack glutaminyl-tRNA synthetase. The reaction takes place in the presence of glutamine and ATP through an activated gamma-phospho-Glu-tRNA(Gln). This is Glutamyl-tRNA(Gln) amidotransferase subunit A from Aliarcobacter butzleri (strain RM4018) (Arcobacter butzleri).